The primary structure comprises 188 residues: Elongation factor P (188 aa).

Belongs to the elongation factor P family.

Its subcellular location is the cytoplasm. It participates in protein biosynthesis; polypeptide chain elongation. Its function is as follows. Involved in peptide bond synthesis. Stimulates efficient translation and peptide-bond synthesis on native or reconstituted 70S ribosomes in vitro. Probably functions indirectly by altering the affinity of the ribosome for aminoacyl-tRNA, thus increasing their reactivity as acceptors for peptidyl transferase. In Cereibacter sphaeroides (strain KD131 / KCTC 12085) (Rhodobacter sphaeroides), this protein is Elongation factor P.